The primary structure comprises 1198 residues: DNA polymerase (1198 aa).

Disordered regions lie at residues 1–87 (MALV…PRGT), 179–199 (LEQP…PNPP), and 904–930 (QLAL…PPSG). Composition is skewed to low complexity over residues 30–40 (QQPTRAAPAPA) and 57–68 (APPTSGGSPASP).

The protein belongs to the DNA polymerase type-B family. As to quaternary structure, heterodimer with the terminal protein; this heterodimer binds to bp 9 to 18 of the genome. Forms a complex with viral pTP, DBP and hosts NFIA and POU2F1/OCT1 for initiation of replication.

The protein resides in the host nucleus. The enzyme catalyses DNA(n) + a 2'-deoxyribonucleoside 5'-triphosphate = DNA(n+1) + diphosphate. In terms of biological role, eukaryotic-type DNA polymerase involved in viral genomic replication. DNA synthesis is protein primed, and acts in a strand displacement replication. Assembles in complex with viral pTP, DBP, host NFIA and host POU2F1/OCT1 on viral origin of replication. The polymerase covalently transfers dCMP onto pTP, thereby initiating complementary strand synthesis. The chain is DNA polymerase from Homo sapiens (Human).